The primary structure comprises 249 residues: Cytochrome c oxidase subunit 2 (249 aa).

An N-terminal signal peptide occupies residues 1–13 (MLNLFQIMNMINN). The Mitochondrial intermembrane portion of the chain corresponds to 14–40 (DVPTPYGFYFQDSATPNQEGILELHDN). Residues 41-62 (IMFYLVVILGLVSWMLFTIVRT) traverse the membrane as a helical segment. The Mitochondrial matrix segment spans residues 63 to 80 (YSRNPMAYKYIKHGQTIE). A helical membrane pass occupies residues 81-105 (IIWKIFPAVILLTIAFPSFILLYLC). Over 106-249 (DEVISPAMTI…PKFLEWLNEQ (144 aa)) the chain is Mitochondrial intermembrane. Residues His-184, Cys-219, Glu-221, Cys-223, His-227, and Met-230 each contribute to the Cu cation site. Position 221 (Glu-221) interacts with Mg(2+).

This sequence belongs to the cytochrome c oxidase subunit 2 family. Component of the cytochrome c oxidase (complex IV, CIV), a multisubunit enzyme composed of a catalytic core of 3 subunits and several supernumerary subunits. The complex exists as a monomer or a dimer and forms supercomplexes (SCs) in the inner mitochondrial membrane with ubiquinol-cytochrome c oxidoreductase (cytochrome b-c1 complex, complex III, CIII). The cofactor is Cu cation. Post-translationally, the signal sequence of COX2 is processed by IMP1.

It is found in the mitochondrion inner membrane. The enzyme catalyses 4 Fe(II)-[cytochrome c] + O2 + 8 H(+)(in) = 4 Fe(III)-[cytochrome c] + 2 H2O + 4 H(+)(out). Component of the cytochrome c oxidase, the last enzyme in the mitochondrial electron transport chain which drives oxidative phosphorylation. The respiratory chain contains 3 multisubunit complexes succinate dehydrogenase (complex II, CII), ubiquinol-cytochrome c oxidoreductase (cytochrome b-c1 complex, complex III, CIII) and cytochrome c oxidase (complex IV, CIV), that cooperate to transfer electrons derived from NADH and succinate to molecular oxygen, creating an electrochemical gradient over the inner membrane that drives transmembrane transport and the ATP synthase. Cytochrome c oxidase is the component of the respiratory chain that catalyzes the reduction of oxygen to water. Electrons originating from reduced cytochrome c in the intermembrane space (IMS) are transferred via the dinuclear copper A center (CU(A)) of subunit 2 and heme A of subunit 1 to the active site in subunit 1, a binuclear center (BNC) formed by heme A3 and copper B (CU(B)). The BNC reduces molecular oxygen to 2 water molecules using 4 electrons from cytochrome c in the IMS and 4 protons from the mitochondrial matrix. The chain is Cytochrome c oxidase subunit 2 (COX2) from Maudiozyma exigua (Yeast).